We begin with the raw amino-acid sequence, 636 residues long: Chaperone protein DnaK (636 aa).

Thr197 bears the Phosphothreonine; by autocatalysis mark. Over residues Leu596 to Gly607 the composition is skewed to low complexity. Residues Leu596–Arg636 form a disordered region. Positions Ser613–Arg636 are enriched in acidic residues.

This sequence belongs to the heat shock protein 70 family.

In terms of biological role, acts as a chaperone. This is Chaperone protein DnaK from Rubrobacter xylanophilus (strain DSM 9941 / JCM 11954 / NBRC 16129 / PRD-1).